A 174-amino-acid chain; its full sequence is Co-chaperone protein HscB homolog (174 aa).

In terms of domain architecture, J spans 2 to 74 (NYFELFKFSP…IRRAEHMLSL (73 aa)).

Belongs to the HscB family. As to quaternary structure, interacts with HscA and stimulates its ATPase activity.

Functionally, co-chaperone involved in the maturation of iron-sulfur cluster-containing proteins. Seems to help targeting proteins to be folded toward HscA. The chain is Co-chaperone protein HscB homolog from Shewanella baltica (strain OS185).